The chain runs to 302 residues: Homoserine O-acetyltransferase (302 aa).

Cys142 serves as the catalytic Acyl-thioester intermediate. Positions 163 and 192 each coordinate substrate. Residue His235 is the Proton acceptor of the active site. The active site involves Glu237. Position 249 (Arg249) interacts with substrate.

The protein belongs to the MetA family.

The protein resides in the cytoplasm. It carries out the reaction L-homoserine + acetyl-CoA = O-acetyl-L-homoserine + CoA. It participates in amino-acid biosynthesis; L-methionine biosynthesis via de novo pathway; O-acetyl-L-homoserine from L-homoserine: step 1/1. Functionally, transfers an acetyl group from acetyl-CoA to L-homoserine, forming acetyl-L-homoserine. The sequence is that of Homoserine O-acetyltransferase from Bacillus pumilus (strain SAFR-032).